The following is a 211-amino-acid chain: ATP phosphoribosyltransferase (211 aa).

This sequence belongs to the ATP phosphoribosyltransferase family. Short subfamily. In terms of assembly, heteromultimer composed of HisG and HisZ subunits.

The protein resides in the cytoplasm. The catalysed reaction is 1-(5-phospho-beta-D-ribosyl)-ATP + diphosphate = 5-phospho-alpha-D-ribose 1-diphosphate + ATP. Its pathway is amino-acid biosynthesis; L-histidine biosynthesis; L-histidine from 5-phospho-alpha-D-ribose 1-diphosphate: step 1/9. Its function is as follows. Catalyzes the condensation of ATP and 5-phosphoribose 1-diphosphate to form N'-(5'-phosphoribosyl)-ATP (PR-ATP). Has a crucial role in the pathway because the rate of histidine biosynthesis seems to be controlled primarily by regulation of HisG enzymatic activity. This chain is ATP phosphoribosyltransferase, found in Pseudomonas fluorescens (strain ATCC BAA-477 / NRRL B-23932 / Pf-5).